We begin with the raw amino-acid sequence, 277 residues long: 3-methyl-2-oxobutanoate hydroxymethyltransferase (277 aa).

Positions 49 and 88 each coordinate Mg(2+). 3-methyl-2-oxobutanoate-binding positions include 49-50 (DS), aspartate 88, and lysine 118. Residue glutamate 120 coordinates Mg(2+). Residue glutamate 186 is the Proton acceptor of the active site.

This sequence belongs to the PanB family. Homodecamer; pentamer of dimers. Mg(2+) is required as a cofactor.

It is found in the cytoplasm. The enzyme catalyses 3-methyl-2-oxobutanoate + (6R)-5,10-methylene-5,6,7,8-tetrahydrofolate + H2O = 2-dehydropantoate + (6S)-5,6,7,8-tetrahydrofolate. It functions in the pathway cofactor biosynthesis; (R)-pantothenate biosynthesis; (R)-pantoate from 3-methyl-2-oxobutanoate: step 1/2. Functionally, catalyzes the reversible reaction in which hydroxymethyl group from 5,10-methylenetetrahydrofolate is transferred onto alpha-ketoisovalerate to form ketopantoate. This is 3-methyl-2-oxobutanoate hydroxymethyltransferase from Cereibacter sphaeroides (strain ATCC 17029 / ATH 2.4.9) (Rhodobacter sphaeroides).